Reading from the N-terminus, the 428-residue chain is L-glutamyl-[BtrI acyl-carrier protein] decarboxylase (428 aa).

Lysine 49 carries the N6-(pyridoxal phosphate)lysine modification. Pyridoxal 5'-phosphate-binding positions include glycine 228, 269-272 (ESGR), and tyrosine 375. Substrate-binding residues include arginine 272 and tyrosine 375.

Belongs to the Orn/Lys/Arg decarboxylase class-II family. In terms of assembly, homodimer. Requires pyridoxal 5'-phosphate as cofactor.

The catalysed reaction is gamma-L-glutamyl-[BtrI ACP] + H(+) = 4-aminobutanoyl-[BtrI ACP] + CO2. The protein operates within antibiotic biosynthesis; butirosin biosynthesis. Its function is as follows. Pyridoxal phosphate-dependent decarboxylase that catalyzes 1 step in the biosynthesis of the side chain of the aminoglycoside antibiotics in the biosynthetic pathway of butirosin. Able to decarboxylate L-ornithine, L-arginine, L-lysine, but not L-glutamate or any D-amino acids. Has low activity with substrates not bound to an acyl-carrier protein. This is L-glutamyl-[BtrI acyl-carrier protein] decarboxylase (btrK) from Niallia circulans (Bacillus circulans).